The following is a 231-amino-acid chain: MARICVALDVPWERAIKIVKDLYDFFETYPLILKIGHKIYLEKGGDAVKELKEDFPYEVFLDLKLHDIPSVVGLAVEKISELGTDYTTVHLLGGPEMVKEAVKNKGSMKILGVTILTSHDENYIKFLKSNFEDIKNFTLYLARVGIENGVDGVVCSGEEVEFLKKNIEKDFIAVVPGIRIKKEKRHDQKRVLTPAEAKKRGADVIVIGREITESKNPVYVVERALKMMGEI.

Substrate is bound by residues aspartate 9, lysine 34, 62 to 71, threonine 117, arginine 179, glutamine 188, glycine 208, and arginine 209; that span reads DLKLHDIPSV. Lysine 64 serves as the catalytic Proton donor.

This sequence belongs to the OMP decarboxylase family. Type 1 subfamily. Homodimer.

It carries out the reaction orotidine 5'-phosphate + H(+) = UMP + CO2. It participates in pyrimidine metabolism; UMP biosynthesis via de novo pathway; UMP from orotate: step 2/2. Its function is as follows. Catalyzes the decarboxylation of orotidine 5'-monophosphate (OMP) to uridine 5'-monophosphate (UMP). In Aquifex aeolicus (strain VF5), this protein is Orotidine 5'-phosphate decarboxylase.